Reading from the N-terminus, the 96-residue chain is Acylphosphatase (96 aa).

The Acylphosphatase-like domain maps to 4-91; it reads RVHVYVKGKV…GEFDDFRILY (88 aa). Catalysis depends on residues arginine 19 and asparagine 37.

Belongs to the acylphosphatase family.

It catalyses the reaction an acyl phosphate + H2O = a carboxylate + phosphate + H(+). The protein is Acylphosphatase (acyP) of Syntrophus aciditrophicus (strain SB).